The chain runs to 97 residues: Large ribosomal subunit protein bL28 (97 aa).

It belongs to the bacterial ribosomal protein bL28 family.

The sequence is that of Large ribosomal subunit protein bL28 from Bartonella quintana (strain Toulouse) (Rochalimaea quintana).